The following is a 130-amino-acid chain: Organ-specific protein P4 (130 aa).

Tandem repeats lie at residues 60-85 (HAKE…DNEI) and 86-111 (HANE…DNEI). Residues 60-111 (HAKENKGAIGEFEPCPNASAYGDNEIHANENKGAIGEFETRPNGSAYGDNEI) form a 2 X 26 AA tandem repeats region. The tract at residues 79-130 (AYGDNEIHANENKGAIGEFETRPNGSAYGDNEIGAEFTDDFEPRPSMTKYNA) is disordered.

The protein to organ specific protein S2. In terms of tissue distribution, expressed in pods.

The polypeptide is Organ-specific protein P4 (Pisum sativum (Garden pea)).